We begin with the raw amino-acid sequence, 712 residues long: MVVATTIALYASPASTVCSTAHQINAHISCDLDLNSRSSSASSSTSSPTIGGLSLLFSGASVKSSSSSSSSHPSVGEELASIRHDRSEDRTLSGSFCYSPSKFIGSSYLKRDHQSPVSVLHGPISSGNSPPMRISRDRNLDGGSALRVGSSRLFNGFVRKAIGSCVDYDTDSVLVDEQLPFTMDDGFEGERRQPYARDLLRRAQLKHKIFEDESVIKAFYEAEKAHRGQMRATGDPYLQHCVETAMLLADIGANSTVVVAGILHDTLDDSFMSYDYILRTFGSGVADLVEGVSQLSKLARENNTACKTVEADRLHTMFLAMADARAVLIKLADRLHNMMTLYALPPVKRQRFAKETLEIFAPLANRLGISSWKVKLENLCFKHLHPDQHHEMSDMLEDSFDEAMITSAIEKLEQALKKEGISYHVVSGRHKSLYSIYCKMLKKKLTMDEIHDIHGLRLIVDNEKDCYKALGVVHKLWSEVPGKLKDYISHPKFNGYQSLHTVVMGDGTIPLEVQIRTKEMHLQAEFGFAAHWRYKEGDCKHSSFVLQMVEWARWVVTWHFETMSKDGSSICSSEPLCSFPSHAEDCPFSYKPSGNQEGPVYVIVIENEKMSVQEFPENSTVSDLLRRAGPGSSRWSMYSIPAKEELRPRLNQTPVSDLKCKLKMGDVVELTPAIPDKSLTEYREEIQRMYDRGLAFSRPHRAATGTMVGWGS.

A chloroplast-targeting transit peptide spans 1–64 (MVVATTIALY…LLFSGASVKS (64 aa)). Positions 65–74 (SSSSSSSHPS) are enriched in low complexity. The interval 65–84 (SSSSSSSHPSVGEELASIRH) is disordered. An HD domain is found at 237–338 (YLQHCVETAM…IKLADRLHNM (102 aa)).

It belongs to the RelA/SpoT family.

The protein resides in the plastid. It is found in the chloroplast. The enzyme catalyses GTP + ATP = guanosine 3'-diphosphate 5'-triphosphate + AMP. Its function is as follows. Probable ppGpp (guanosine 3'-diphosphate 5'-diphosphate) synthetase that may be involved in a rapid plant ppGpp-mediated response to pathogens and other stresses. This is Probable GTP diphosphokinase RSH3, chloroplastic (RSH3) from Arabidopsis thaliana (Mouse-ear cress).